The primary structure comprises 621 residues: Solute carrier family 2, facilitated glucose transporter member 12 (621 aa).

Over 1 to 48 (MVPVENTEGPNLLNQKGTAVETEGSYRASGSRHPPWARGCGMFTFLSS) the chain is Cytoplasmic. The chain crosses the membrane as a helical span at residues 49–69 (VTAAVSGLLVGYELGIISGAL). At 70–84 (LQIKTLLTLSCHEQE) the chain is on the extracellular side. The helical transmembrane segment at 85–105 (MVVSSLLIGALLASLTGGVLI) threads the bilayer. The Cytoplasmic portion of the chain corresponds to 106 to 119 (DRYGRRTAIILSSC). A helical membrane pass occupies residues 120–140 (LLGLGSLVLILSLSYTVLIVG). Position 141 (arginine 141) is a topological domain, extracellular. A helical membrane pass occupies residues 142-162 (IAIGVSISLSSIATCVYIAEI). Residues 163–176 (APQHRRGLLVSLNE) lie on the Cytoplasmic side of the membrane. A helical membrane pass occupies residues 177 to 197 (LMIVIGILSAYISNYAFANVF). The Extracellular segment spans residues 198–201 (HGWK). A helical membrane pass occupies residues 202–222 (YMFGLVIPLGILQAIAMYFLP). The Cytoplasmic segment spans residues 223-282 (PSPRFLVMKGQEGAASKVLGRLRALSDATEELTVIKSSLKDEYQYSFWDLFRSKDNMRTR). Residues 283-303 (IMIGLTLVFFVQITGQPNILF) traverse the membrane as a helical segment. Topologically, residues 304 to 321 (YASTVLKSVGFQSNEAAS) are extracellular. Residues 322–342 (LASTGVGVVKVISTIPATLLV) form a helical membrane-spanning segment. Residues 343-349 (DHVGSKT) lie on the Cytoplasmic side of the membrane. A helical transmembrane segment spans residues 350-370 (FLCIGSSVMAASLVTMGIVNL). The Extracellular portion of the chain corresponds to 371 to 470 (NIHMNFTNIC…PAFLKWLSLA (100 aa)). Residues asparagine 375, asparagine 387, asparagine 400, and asparagine 405 are each glycosylated (N-linked (GlcNAc...) asparagine). The chain crosses the membrane as a helical span at residues 471-491 (SLLVYVAAFSIGLGPMPWLVL). Residues 492–502 (SEIFPGGIRGR) are Cytoplasmic-facing. The chain crosses the membrane as a helical span at residues 503–523 (AMALTSSMNWGINLLISLTFL). At 524-532 (TVTDLIGLP) the chain is on the extracellular side. Residues 533-553 (WVCFIYTIMSLASLLFVVMFI) traverse the membrane as a helical segment. Residues 554 to 621 (PETKGCSLEQ…GQSRQLSPEN (68 aa)) lie on the Cytoplasmic side of the membrane.

The protein belongs to the major facilitator superfamily. Sugar transporter (TC 2.A.1.1) family. Glucose transporter subfamily.

The protein localises to the cell membrane. It localises to the endomembrane system. It is found in the cytoplasm. Its subcellular location is the perinuclear region. It carries out the reaction D-glucose(out) = D-glucose(in). Insulin-independent facilitative glucose transporter. In Macaca fascicularis (Crab-eating macaque), this protein is Solute carrier family 2, facilitated glucose transporter member 12.